The primary structure comprises 29 residues: L-serine dehydratase, beta chain (29 aa).

It belongs to the iron-sulfur dependent L-serine dehydratase family. As to quaternary structure, heterodimer of an alpha chain and a beta chain. Requires [4Fe-4S] cluster as cofactor.

It catalyses the reaction L-serine = pyruvate + NH4(+). It participates in carbohydrate biosynthesis; gluconeogenesis. The chain is L-serine dehydratase, beta chain from Anaerotignum propionicum (Clostridium propionicum).